The sequence spans 289 residues: Bis(5'-nucleosyl)-tetraphosphatase, symmetrical (289 aa).

It belongs to the Ap4A hydrolase family.

It carries out the reaction P(1),P(4)-bis(5'-adenosyl) tetraphosphate + H2O = 2 ADP + 2 H(+). Functionally, hydrolyzes diadenosine 5',5'''-P1,P4-tetraphosphate to yield ADP. The protein is Bis(5'-nucleosyl)-tetraphosphatase, symmetrical of Yersinia pseudotuberculosis serotype O:1b (strain IP 31758).